The following is a 312-amino-acid chain: Olfactory receptor 5P4 (312 aa).

Topologically, residues 1 to 25 are extracellular; that stretch reads METENDTMVTEFIILGLTDSATLRA. Residue N5 is glycosylated (N-linked (GlcNAc...) asparagine). A helical transmembrane segment spans residues 26–46; it reads ILFVFFLPVYIVTVVGNISII. The Cytoplasmic segment spans residues 47-54; it reads LLIRSSPQ. The chain crosses the membrane as a helical span at residues 55–75; the sequence is LHTPMYLFLSHLAFVDIGYST. Residues 76–99 are Extracellular-facing; that stretch reads SVTPIMLISFLREETTIPLAGCAA. Residues C97 and C189 are joined by a disulfide bond. Residues 100–120 form a helical membrane-spanning segment; it reads QLGSDVAFGTTECFLLATMAY. Topologically, residues 121-133 are cytoplasmic; sequence DRYVAICSPLLYS. A helical membrane pass occupies residues 134-154; sequence TQMSPAICCFLLGASYLGGCM. Residues 155–196 are Extracellular-facing; sequence NASSFTGCFVNLNFCGPNKVNHFFCDLFPLVKLSCGHAYIAE. Residues 197–217 traverse the membrane as a helical segment; that stretch reads ISPSISSASVLVSTLSTIIVS. Residues 218 to 237 are Cytoplasmic-facing; that stretch reads YIYILHSILRMRSAEGRNKA. The chain crosses the membrane as a helical span at residues 238–258; that stretch reads FSTCTSHLTAVTLFYGTVLFV. At 259 to 271 the chain is on the extracellular side; sequence YVMPKSSYSADQV. The helical transmembrane segment at 272-292 threads the bilayer; it reads KVASVVYTVVIPMLNPLIYSL. Residues 293 to 312 are Cytoplasmic-facing; sequence RNKEVKEAMKKLMARTHWFP.

The protein belongs to the G-protein coupled receptor 1 family.

The protein resides in the cell membrane. Functionally, potential odorant receptor. This is Olfactory receptor 5P4 from Mus musculus (Mouse).